The following is a 115-amino-acid chain: Large ribosomal subunit protein uL24 (115 aa).

This sequence belongs to the universal ribosomal protein uL24 family. As to quaternary structure, part of the 50S ribosomal subunit.

One of two assembly initiator proteins, it binds directly to the 5'-end of the 23S rRNA, where it nucleates assembly of the 50S subunit. Functionally, one of the proteins that surrounds the polypeptide exit tunnel on the outside of the subunit. The chain is Large ribosomal subunit protein uL24 from Amoebophilus asiaticus (strain 5a2).